The sequence spans 330 residues: ADP-L-glycero-D-manno-heptose-6-epimerase (330 aa).

Residues 11–12 (FI), 32–33 (DN), lysine 39, lysine 54, 75–79 (EGACS), and asparagine 92 contribute to the NADP(+) site. Residue tyrosine 139 is the Proton acceptor of the active site. NADP(+) is bound at residue lysine 143. Asparagine 168 contributes to the substrate binding site. The NADP(+) site is built by valine 169 and lysine 177. Lysine 177 acts as the Proton acceptor in catalysis. Residues arginine 179, histidine 186, 200-203 (FGEY), arginine 213, and tyrosine 292 each bind substrate.

The protein belongs to the NAD(P)-dependent epimerase/dehydratase family. HldD subfamily. Homopentamer. NADP(+) serves as cofactor.

The enzyme catalyses ADP-D-glycero-beta-D-manno-heptose = ADP-L-glycero-beta-D-manno-heptose. Its pathway is nucleotide-sugar biosynthesis; ADP-L-glycero-beta-D-manno-heptose biosynthesis; ADP-L-glycero-beta-D-manno-heptose from D-glycero-beta-D-manno-heptose 7-phosphate: step 4/4. Catalyzes the interconversion between ADP-D-glycero-beta-D-manno-heptose and ADP-L-glycero-beta-D-manno-heptose via an epimerization at carbon 6 of the heptose. The chain is ADP-L-glycero-D-manno-heptose-6-epimerase from Paraburkholderia phytofirmans (strain DSM 17436 / LMG 22146 / PsJN) (Burkholderia phytofirmans).